Here is a 968-residue protein sequence, read N- to C-terminus: Glycine dehydrogenase (decarboxylating) (968 aa).

The residue at position 717 (K717) is an N6-(pyridoxal phosphate)lysine.

It belongs to the GcvP family. In terms of assembly, the glycine cleavage system is composed of four proteins: P, T, L and H. It depends on pyridoxal 5'-phosphate as a cofactor.

The catalysed reaction is N(6)-[(R)-lipoyl]-L-lysyl-[glycine-cleavage complex H protein] + glycine + H(+) = N(6)-[(R)-S(8)-aminomethyldihydrolipoyl]-L-lysyl-[glycine-cleavage complex H protein] + CO2. In terms of biological role, the glycine cleavage system catalyzes the degradation of glycine. The P protein binds the alpha-amino group of glycine through its pyridoxal phosphate cofactor; CO(2) is released and the remaining methylamine moiety is then transferred to the lipoamide cofactor of the H protein. This is Glycine dehydrogenase (decarboxylating) from Tropheryma whipplei (strain TW08/27) (Whipple's bacillus).